The primary structure comprises 215 residues: 3-demethoxyubiquinol 3-hydroxylase (215 aa).

Fe cation is bound by residues glutamate 64, glutamate 94, histidine 97, glutamate 146, glutamate 178, and histidine 181.

It belongs to the COQ7 family. Fe cation is required as a cofactor.

The protein localises to the cell membrane. It catalyses the reaction a 5-methoxy-2-methyl-3-(all-trans-polyprenyl)benzene-1,4-diol + AH2 + O2 = a 3-demethylubiquinol + A + H2O. It participates in cofactor biosynthesis; ubiquinone biosynthesis. Catalyzes the hydroxylation of 2-nonaprenyl-3-methyl-6-methoxy-1,4-benzoquinol during ubiquinone biosynthesis. In Pseudomonas paraeruginosa (strain DSM 24068 / PA7) (Pseudomonas aeruginosa (strain PA7)), this protein is 3-demethoxyubiquinol 3-hydroxylase.